A 435-amino-acid chain; its full sequence is Gap junction alpha-3 protein (435 aa).

An intramembrane segment occupies 2–15; sequence GDWSFLGRLLENAQ. The Cytoplasmic segment spans residues 16 to 19; it reads EHST. Residues 20 to 40 traverse the membrane as a helical segment; the sequence is VIGKVWLTVLFIFRILVLGAA. At 41 to 71 the chain is on the extracellular side; sequence AEDVWGDEQSDFTCNTQQPGCENVCYDRAFP. Cystine bridges form between Cys54–Cys192, Cys61–Cys186, and Cys65–Cys181. The chain crosses the membrane as a helical span at residues 72–92; it reads ISHIRFWALQIIFVSTPTLIY. The Cytoplasmic segment spans residues 93-152; it reads LGHVLHIVRMEEKKKEREEEEQLKRESPSPKEPPQDNPSSRDDRGRVRMAGALLRTYVFN. Positions 108–121 are enriched in basic and acidic residues; the sequence is EREEEEQLKRESPS. The tract at residues 108–136 is disordered; sequence EREEEEQLKRESPSPKEPPQDNPSSRDDR. Residues 153–173 traverse the membrane as a helical segment; that stretch reads IIFKTLFEVGFIAGQYFLYGF. Residues 174 to 201 lie on the Extracellular side of the membrane; sequence ELKPLYRCDRWPCPNTVDCFISRPTEKT. The chain crosses the membrane as a helical span at residues 202-222; sequence IFIIFMLAVACASLLLNMLEI. Residues 223–435 are Cytoplasmic-facing; the sequence is YHLGWKKLKQ…GRARPEDLAI (213 aa). The tract at residues 332–435 is disordered; sequence AAERQPPALK…GRARPEDLAI (104 aa). Low complexity-rich tracts occupy residues 342–389 and 415–427; these read AYPA…ALAG and GRASKASRASSGR.

It belongs to the connexin family. Alpha-type (group II) subfamily. In terms of assembly, a hemichannel or connexon is composed of a hexamer of connexins. A functional gap junction is formed by the apposition of two hemichannels. Forms heteromeric channels with GJA8.

The protein localises to the cell membrane. Its subcellular location is the cell junction. It localises to the gap junction. Functionally, structural component of lens fiber gap junctions. Gap junctions are dodecameric channels that connect the cytoplasm of adjoining cells. They are formed by the docking of two hexameric hemichannels, one from each cell membrane. Small molecules and ions diffuse from one cell to a neighboring cell via the central pore. This chain is Gap junction alpha-3 protein (GJA3), found in Homo sapiens (Human).